We begin with the raw amino-acid sequence, 173 residues long: Alpha-crystallin A chain (173 aa).

Residue Met1 is modified to N-acetylmethionine. Residues 1–63 form a required for complex formation with BFSP1 and BFSP2 region; it reads MDITIQHPWF…RTVLESGISE (63 aa). Gln6 carries the post-translational modification Deamidated glutamine; partial. A Phosphoserine modification is found at Ser45. Gln50 carries the post-translational modification Deamidated glutamine; partial. One can recognise a sHSP domain in the interval 52-164; the sequence is LFRTVLESGI…SDRSIPVSRE (113 aa). Lys99 is subject to N6-acetyllysine. Zn(2+)-binding residues include His100, Glu102, and His107. Ser122 carries the post-translational modification Phosphoserine. Position 123 is a deamidated asparagine; partial (Asn123). The segment at 144-173 is disordered; that stretch reads PKIHSNMESSHSDRSIPVSREEKPTLAPSS. Basic and acidic residues predominate over residues 153-167; that stretch reads SHSDRSIPVSREEKP. Zn(2+) is bound at residue His154. O-linked (GlcNAc) serine glycosylation is present at Ser162.

This sequence belongs to the small heat shock protein (HSP20) family. As to quaternary structure, heteromer composed of three CRYAA and one CRYAB subunits. Inter-subunit bridging via zinc ions enhances stability, which is crucial as there is no protein turn over in the lens. Can also form homodimers and homotetramers (dimers of dimers) which serve as the building blocks of homooligomers. Within homooligomers, the zinc-binding motif is created from residues of 3 different molecules. His-100 and Glu-102 from one molecule are ligands of the zinc ion, and His-107 and His-154 residues from additional molecules complete the site with tetrahedral coordination geometry. Part of a complex required for lens intermediate filament formation composed of BFSP1, BFSP2 and CRYAA. Post-translationally, acetylation at Lys-99 may increase chaperone activity. In terms of processing, undergoes age-dependent proteolytical cleavage at the C-terminus.

Its subcellular location is the cytoplasm. The protein localises to the nucleus. Functionally, contributes to the transparency and refractive index of the lens. Acts as a chaperone, preventing aggregation of various proteins under a wide range of stress conditions. Required for the correct formation of lens intermediate filaments as part of a complex composed of BFSP1, BFSP2 and CRYAA. The sequence is that of Alpha-crystallin A chain (CRYAA) from Didelphis virginiana (North American opossum).